The sequence spans 352 residues: UDP-N-acetylglucosamine--N-acetylmuramyl-(pentapeptide) pyrophosphoryl-undecaprenol N-acetylglucosamine transferase (352 aa).

The UDP-N-acetyl-alpha-D-glucosamine site is built by Ser-195 and Gln-287.

The protein belongs to the glycosyltransferase 28 family. MurG subfamily.

The protein resides in the cell membrane. It catalyses the reaction Mur2Ac(oyl-L-Ala-gamma-D-Glu-L-Lys-D-Ala-D-Ala)-di-trans,octa-cis-undecaprenyl diphosphate + UDP-N-acetyl-alpha-D-glucosamine = beta-D-GlcNAc-(1-&gt;4)-Mur2Ac(oyl-L-Ala-gamma-D-Glu-L-Lys-D-Ala-D-Ala)-di-trans,octa-cis-undecaprenyl diphosphate + UDP + H(+). Its pathway is cell wall biogenesis; peptidoglycan biosynthesis. Functionally, cell wall formation. Catalyzes the transfer of a GlcNAc subunit on undecaprenyl-pyrophosphoryl-MurNAc-pentapeptide (lipid intermediate I) to form undecaprenyl-pyrophosphoryl-MurNAc-(pentapeptide)GlcNAc (lipid intermediate II). The chain is UDP-N-acetylglucosamine--N-acetylmuramyl-(pentapeptide) pyrophosphoryl-undecaprenol N-acetylglucosamine transferase from Streptococcus pneumoniae (strain Hungary19A-6).